Consider the following 302-residue polypeptide: Sulfate adenylyltransferase subunit 2 (302 aa).

The segment at 280–302 (RQGRAIDHDQSGSMELKKRQGYF) is disordered.

The protein belongs to the PAPS reductase family. CysD subfamily. Heterodimer composed of CysD, the smaller subunit, and CysN.

It carries out the reaction sulfate + ATP + H(+) = adenosine 5'-phosphosulfate + diphosphate. The protein operates within sulfur metabolism; hydrogen sulfide biosynthesis; sulfite from sulfate: step 1/3. With CysN forms the ATP sulfurylase (ATPS) that catalyzes the adenylation of sulfate producing adenosine 5'-phosphosulfate (APS) and diphosphate, the first enzymatic step in sulfur assimilation pathway. APS synthesis involves the formation of a high-energy phosphoric-sulfuric acid anhydride bond driven by GTP hydrolysis by CysN coupled to ATP hydrolysis by CysD. The polypeptide is Sulfate adenylyltransferase subunit 2 (Vibrio parahaemolyticus serotype O3:K6 (strain RIMD 2210633)).